The primary structure comprises 349 residues: MAELLAIKWDDNRDKLILLDQTILPNKIEYIEYDTAEGVYDSIKDMIVRGAPAIGVTAAYGLYFAAKVAPEDKFENFFKYLKEKSSYLDSSRPTAVNLSWALKVMESKALENKDKDVKEIKSILREEAKRIHEEDIEICKTIGENLITLLKDGVGILTHCNAGQLATSKYGTATSPMYLAKEKGWNFKVYSDETRPRLQGSTLTALELYEAGIDVTTITDNMAAMVMSQGKIDAVIVGCDRIAANGDTANKIGTMGVSILAKYFGIPMYIAAPTPSIDINTKTGEDIPIEERNPEEVTSRFGVWTAPKGVKVYNPGFDVTPHENITAIVTEKGIVYPPFKENLKKLFEK.

Substrate contacts are provided by residues 49-51 (RGA), Arg92, and Gln199. Asp240 serves as the catalytic Proton donor. 250-251 (NK) lines the substrate pocket.

This sequence belongs to the EIF-2B alpha/beta/delta subunits family. DrdI subfamily.

The catalysed reaction is 5-deoxy-alpha-D-ribose 1-phosphate = 5-deoxy-D-ribulose 1-phosphate. Its pathway is carbohydrate degradation. In terms of biological role, catalyzes the isomerization of 5-deoxy-alpha-D-ribose 1-phosphate to 5-deoxy-D-ribulose 1-phosphate, as part of a 5-deoxyribose salvage pathway that recycles this toxic radical SAM enzyme by-product to mainstream metabolites. The polypeptide is 5-deoxyribose 1-phosphate isomerase (Clostridium botulinum (strain ATCC 19397 / Type A)).